The following is a 402-amino-acid chain: Coiled-coil domain-containing protein 188 (402 aa).

Disordered regions lie at residues 1-30 (MEGL…GGGL), 50-74 (HSVQ…EGEA), and 108-131 (HPGS…PCPC). Positions 154-189 (GLLGSAEQSFLQLEQENHSLKRQNQELREQLGALLG) form a coiled coil. A helical transmembrane segment spans residues 347–363 (LLLGALLVWTAAYVYVV).

It is found in the membrane. This is Coiled-coil domain-containing protein 188 from Homo sapiens (Human).